The following is a 1291-amino-acid chain: Cytoplasmic FMR1-interacting protein (1291 aa).

A disordered region spans residues 1269-1291 (HPSVISSSSHYQDPQKLRQSMNN). The span at 1271–1291 (SVISSSSHYQDPQKLRQSMNN) shows a compositional bias: polar residues.

The protein belongs to the CYFIP family. As to quaternary structure, interacts with Fmr1 and Rac1. Component of the WAVE complex composed of Hem/Kette, Scar/Wave and Cyfip where it binds through its C-terminus directly to Hem.

The protein localises to the cytoplasm. Functionally, plays a role in guidance and morphology of central and peripheral axons and in synaptic morphology. Also required for formation of cell membrane protrusions and for bristle development. In Drosophila pseudoobscura pseudoobscura (Fruit fly), this protein is Cytoplasmic FMR1-interacting protein.